The following is a 221-amino-acid chain: Phosphoribosylformylglycinamidine synthase subunit PurQ (221 aa).

The region spanning 2–221 is the Glutamine amidotransferase type-1 domain; sequence KTAVIQFPGS…VFESLKTVKK (220 aa). Cys87 serves as the catalytic Nucleophile. Active-site residues include His195 and Glu197.

As to quaternary structure, part of the FGAM synthase complex composed of 1 PurL, 1 PurQ and 2 PurS subunits.

It localises to the cytoplasm. The catalysed reaction is N(2)-formyl-N(1)-(5-phospho-beta-D-ribosyl)glycinamide + L-glutamine + ATP + H2O = 2-formamido-N(1)-(5-O-phospho-beta-D-ribosyl)acetamidine + L-glutamate + ADP + phosphate + H(+). It carries out the reaction L-glutamine + H2O = L-glutamate + NH4(+). It functions in the pathway purine metabolism; IMP biosynthesis via de novo pathway; 5-amino-1-(5-phospho-D-ribosyl)imidazole from N(2)-formyl-N(1)-(5-phospho-D-ribosyl)glycinamide: step 1/2. Part of the phosphoribosylformylglycinamidine synthase complex involved in the purines biosynthetic pathway. Catalyzes the ATP-dependent conversion of formylglycinamide ribonucleotide (FGAR) and glutamine to yield formylglycinamidine ribonucleotide (FGAM) and glutamate. The FGAM synthase complex is composed of three subunits. PurQ produces an ammonia molecule by converting glutamine to glutamate. PurL transfers the ammonia molecule to FGAR to form FGAM in an ATP-dependent manner. PurS interacts with PurQ and PurL and is thought to assist in the transfer of the ammonia molecule from PurQ to PurL. The polypeptide is Phosphoribosylformylglycinamidine synthase subunit PurQ (Deinococcus radiodurans (strain ATCC 13939 / DSM 20539 / JCM 16871 / CCUG 27074 / LMG 4051 / NBRC 15346 / NCIMB 9279 / VKM B-1422 / R1)).